Consider the following 375-residue polypeptide: Chaperone protein DnaJ (375 aa).

In terms of domain architecture, J spans 4–68; sequence DYYEVLGVGK…QKRAQYDRFG (65 aa). Residues 129-211 form a CR-type zinc finger; sequence GKETDVEIPK…CRGSGRVKVR (83 aa). Cysteine 142, cysteine 145, cysteine 159, cysteine 162, cysteine 185, cysteine 188, cysteine 199, and cysteine 202 together coordinate Zn(2+). 4 CXXCXGXG motif repeats span residues 142–149, 159–166, 185–192, and 199–206; these read CDTCHGSG, CKTCSGTG, CTTCEGKG, and CSSCRGSG. The tract at residues 349–375 is disordered; it reads LSGEKPGQHGGEDEGFFEKMKRAFRGE.

It belongs to the DnaJ family. As to quaternary structure, homodimer. Requires Zn(2+) as cofactor.

The protein resides in the cytoplasm. Its function is as follows. Participates actively in the response to hyperosmotic and heat shock by preventing the aggregation of stress-denatured proteins and by disaggregating proteins, also in an autonomous, DnaK-independent fashion. Unfolded proteins bind initially to DnaJ; upon interaction with the DnaJ-bound protein, DnaK hydrolyzes its bound ATP, resulting in the formation of a stable complex. GrpE releases ADP from DnaK; ATP binding to DnaK triggers the release of the substrate protein, thus completing the reaction cycle. Several rounds of ATP-dependent interactions between DnaJ, DnaK and GrpE are required for fully efficient folding. Also involved, together with DnaK and GrpE, in the DNA replication of plasmids through activation of initiation proteins. This is Chaperone protein DnaJ from Brevibacillus choshinensis.